The sequence spans 352 residues: MTSQASAQAAGNTWPRLISALINGADLTADNTEWAMDTIMSGEATPSQIAGFLVALRSKGETVDEIAGLVEAMLAHANPVDIAGEKLDIVGTGGDQLNTVNISTMAALVCAGAGAKVVKHGNRASSSSSGSADVLEALGVRLDLPIERVARNAEEAGITFCFAQVFHPSFRHTAVPRRELAIPTAFNFLGPLTNPARVQASAVGVANERMAPLVAGVLAKRGSRGLVFRGSDGLDELTTTGPSTVWEIRNGEVTEQTFDPQALGIRAATVEELRGGDATANAAVVRDVLSGVAGPARDAVLLNAAAGLVAFDVDAEGTLTDRMAAALKRAEESIDSGAAAAVLEKWVALTRG.

Residues Gly-91, 94-95 (GD), Thr-99, 101-104 (NIST), 119-127 (KHGNRASSS), and Ser-131 each bind 5-phospho-alpha-D-ribose 1-diphosphate. Gly-91 is a binding site for anthranilate. Residue Ser-103 participates in Mg(2+) binding. Asn-122 contacts anthranilate. Residue Arg-177 coordinates anthranilate. Residues Asp-235 and Glu-236 each coordinate Mg(2+).

Belongs to the anthranilate phosphoribosyltransferase family. Homodimer. It depends on Mg(2+) as a cofactor.

It catalyses the reaction N-(5-phospho-beta-D-ribosyl)anthranilate + diphosphate = 5-phospho-alpha-D-ribose 1-diphosphate + anthranilate. The protein operates within amino-acid biosynthesis; L-tryptophan biosynthesis; L-tryptophan from chorismate: step 2/5. Its function is as follows. Catalyzes the transfer of the phosphoribosyl group of 5-phosphorylribose-1-pyrophosphate (PRPP) to anthranilate to yield N-(5'-phosphoribosyl)-anthranilate (PRA). The chain is Anthranilate phosphoribosyltransferase from Arthrobacter sp. (strain FB24).